A 678-amino-acid chain; its full sequence is Glycine--tRNA ligase beta subunit (678 aa).

The protein belongs to the class-II aminoacyl-tRNA synthetase family. In terms of assembly, tetramer of two alpha and two beta subunits.

It is found in the cytoplasm. It carries out the reaction tRNA(Gly) + glycine + ATP = glycyl-tRNA(Gly) + AMP + diphosphate. The sequence is that of Glycine--tRNA ligase beta subunit from Streptococcus pneumoniae serotype 19F (strain G54).